Reading from the N-terminus, the 338-residue chain is Heat-inducible transcription repressor HrcA (338 aa).

Belongs to the HrcA family.

In terms of biological role, negative regulator of class I heat shock genes (grpE-dnaK-dnaJ and groELS operons). Prevents heat-shock induction of these operons. The protein is Heat-inducible transcription repressor HrcA of Streptomyces avermitilis (strain ATCC 31267 / DSM 46492 / JCM 5070 / NBRC 14893 / NCIMB 12804 / NRRL 8165 / MA-4680).